The sequence spans 107 residues: UPF0145 protein TT_C0892 (107 aa).

It belongs to the UPF0145 family.

This Thermus thermophilus (strain ATCC BAA-163 / DSM 7039 / HB27) protein is UPF0145 protein TT_C0892.